The primary structure comprises 415 residues: Tyrosine--tRNA ligase (415 aa).

Tyr40 contacts L-tyrosine. A 'HIGH' region motif is present at residues 45 to 54; sequence ATAKSLHVGS. Residues Tyr178 and Gln182 each coordinate L-tyrosine. The 'KMSKS' region signature appears at 238-242; it reads KMGKS. Lys241 serves as a coordination point for ATP. In terms of domain architecture, S4 RNA-binding spans 350-414; that stretch reads ASIVQLIVKT…GKKRHALVQL (65 aa).

The protein belongs to the class-I aminoacyl-tRNA synthetase family. TyrS type 1 subfamily. Homodimer.

The protein localises to the cytoplasm. The catalysed reaction is tRNA(Tyr) + L-tyrosine + ATP = L-tyrosyl-tRNA(Tyr) + AMP + diphosphate + H(+). Catalyzes the attachment of tyrosine to tRNA(Tyr) in a two-step reaction: tyrosine is first activated by ATP to form Tyr-AMP and then transferred to the acceptor end of tRNA(Tyr). The sequence is that of Tyrosine--tRNA ligase from Ruegeria pomeroyi (strain ATCC 700808 / DSM 15171 / DSS-3) (Silicibacter pomeroyi).